The following is a 530-amino-acid chain: Bifunctional purine biosynthesis protein PurH (530 aa).

An MGS-like domain is found at 1–148 (MNNARPIRRA…KNHKDVTIVV (148 aa)).

This sequence belongs to the PurH family.

It carries out the reaction (6R)-10-formyltetrahydrofolate + 5-amino-1-(5-phospho-beta-D-ribosyl)imidazole-4-carboxamide = 5-formamido-1-(5-phospho-D-ribosyl)imidazole-4-carboxamide + (6S)-5,6,7,8-tetrahydrofolate. The catalysed reaction is IMP + H2O = 5-formamido-1-(5-phospho-D-ribosyl)imidazole-4-carboxamide. It participates in purine metabolism; IMP biosynthesis via de novo pathway; 5-formamido-1-(5-phospho-D-ribosyl)imidazole-4-carboxamide from 5-amino-1-(5-phospho-D-ribosyl)imidazole-4-carboxamide (10-formyl THF route): step 1/1. It functions in the pathway purine metabolism; IMP biosynthesis via de novo pathway; IMP from 5-formamido-1-(5-phospho-D-ribosyl)imidazole-4-carboxamide: step 1/1. This chain is Bifunctional purine biosynthesis protein PurH, found in Vibrio campbellii (strain ATCC BAA-1116).